A 263-amino-acid polypeptide reads, in one-letter code: Ribonuclease HII (263 aa).

One can recognise an RNase H type-2 domain in the interval 74–262 (EHVAGLDEVG…VQETAATRQT (189 aa)). 3 residues coordinate a divalent metal cation: D80, E81, and D172.

Belongs to the RNase HII family. The cofactor is Mn(2+). Mg(2+) serves as cofactor.

The protein localises to the cytoplasm. The catalysed reaction is Endonucleolytic cleavage to 5'-phosphomonoester.. Functionally, endonuclease that specifically degrades the RNA of RNA-DNA hybrids. In Halalkalibacterium halodurans (strain ATCC BAA-125 / DSM 18197 / FERM 7344 / JCM 9153 / C-125) (Bacillus halodurans), this protein is Ribonuclease HII (rnhB).